The primary structure comprises 209 residues: ATP-dependent Clp protease proteolytic subunit (209 aa).

Ser-113 acts as the Nucleophile in catalysis. The active site involves His-138.

This sequence belongs to the peptidase S14 family. In terms of assembly, fourteen ClpP subunits assemble into 2 heptameric rings which stack back to back to give a disk-like structure with a central cavity, resembling the structure of eukaryotic proteasomes.

The protein resides in the cytoplasm. It catalyses the reaction Hydrolysis of proteins to small peptides in the presence of ATP and magnesium. alpha-casein is the usual test substrate. In the absence of ATP, only oligopeptides shorter than five residues are hydrolyzed (such as succinyl-Leu-Tyr-|-NHMec, and Leu-Tyr-Leu-|-Tyr-Trp, in which cleavage of the -Tyr-|-Leu- and -Tyr-|-Trp bonds also occurs).. Its function is as follows. Cleaves peptides in various proteins in a process that requires ATP hydrolysis. Has a chymotrypsin-like activity. Plays a major role in the degradation of misfolded proteins. This chain is ATP-dependent Clp protease proteolytic subunit, found in Blochmanniella floridana.